A 100-amino-acid polypeptide reads, in one-letter code: Small ribosomal subunit protein uS14c (100 aa).

The protein belongs to the universal ribosomal protein uS14 family. As to quaternary structure, part of the 30S ribosomal subunit.

The protein localises to the plastid. It is found in the chloroplast. Its function is as follows. Binds 16S rRNA, required for the assembly of 30S particles. This chain is Small ribosomal subunit protein uS14c, found in Cyanidioschyzon merolae (strain NIES-3377 / 10D) (Unicellular red alga).